The sequence spans 157 residues: 2-C-methyl-D-erythritol 2,4-cyclodiphosphate synthase (157 aa).

A divalent metal cation is bound by residues Asp-8 and His-10. Residues 8–10 (DVH) and 34–35 (HS) contribute to the 4-CDP-2-C-methyl-D-erythritol 2-phosphate site. Position 42 (His-42) interacts with a divalent metal cation. 4-CDP-2-C-methyl-D-erythritol 2-phosphate contacts are provided by residues 56 to 58 (DIG), 61 to 65 (FPDSD), 132 to 135 (TTTE), Phe-139, and Arg-142.

The protein belongs to the IspF family. Homotrimer. It depends on a divalent metal cation as a cofactor.

The catalysed reaction is 4-CDP-2-C-methyl-D-erythritol 2-phosphate = 2-C-methyl-D-erythritol 2,4-cyclic diphosphate + CMP. It functions in the pathway isoprenoid biosynthesis; isopentenyl diphosphate biosynthesis via DXP pathway; isopentenyl diphosphate from 1-deoxy-D-xylulose 5-phosphate: step 4/6. Its function is as follows. Involved in the biosynthesis of isopentenyl diphosphate (IPP) and dimethylallyl diphosphate (DMAPP), two major building blocks of isoprenoid compounds. Catalyzes the conversion of 4-diphosphocytidyl-2-C-methyl-D-erythritol 2-phosphate (CDP-ME2P) to 2-C-methyl-D-erythritol 2,4-cyclodiphosphate (ME-CPP) with a corresponding release of cytidine 5-monophosphate (CMP). This chain is 2-C-methyl-D-erythritol 2,4-cyclodiphosphate synthase, found in Syntrophomonas wolfei subsp. wolfei (strain DSM 2245B / Goettingen).